A 422-amino-acid chain; its full sequence is Imidazolonepropionase (422 aa).

Histidine 82 and histidine 84 together coordinate Fe(3+). The Zn(2+) site is built by histidine 82 and histidine 84. Residues arginine 91, tyrosine 154, and histidine 187 each contribute to the 4-imidazolone-5-propanoate site. Tyrosine 154 is an N-formimidoyl-L-glutamate binding site. Residue histidine 252 participates in Fe(3+) binding. A Zn(2+)-binding site is contributed by histidine 252. A 4-imidazolone-5-propanoate-binding site is contributed by glutamate 255. Aspartate 327 is a binding site for Fe(3+). Aspartate 327 contributes to the Zn(2+) binding site. The N-formimidoyl-L-glutamate site is built by asparagine 329 and glycine 331. Serine 332 is a 4-imidazolone-5-propanoate binding site.

It belongs to the metallo-dependent hydrolases superfamily. HutI family. Zn(2+) is required as a cofactor. Requires Fe(3+) as cofactor.

The protein localises to the cytoplasm. The catalysed reaction is 4-imidazolone-5-propanoate + H2O = N-formimidoyl-L-glutamate. It functions in the pathway amino-acid degradation; L-histidine degradation into L-glutamate; N-formimidoyl-L-glutamate from L-histidine: step 3/3. In terms of biological role, catalyzes the hydrolytic cleavage of the carbon-nitrogen bond in imidazolone-5-propanoate to yield N-formimidoyl-L-glutamate. It is the third step in the universal histidine degradation pathway. In Alkaliphilus metalliredigens (strain QYMF), this protein is Imidazolonepropionase.